The following is a 337-amino-acid chain: 2-oxoglutarate-dependent ethylene/succinate-forming enzyme (337 aa).

One can recognise a Fe2OG dioxygenase domain in the interval 166 to 286; that stretch reads GWHHMRVLRF…RFACAYFHEP (121 aa). The Fe cation site is built by histidine 189 and histidine 268.

This sequence belongs to the iron/ascorbate-dependent oxidoreductase family. In terms of assembly, monomer. Requires Fe(2+) as cofactor.

The catalysed reaction is 2-oxoglutarate + O2 + 2 H(+) = ethene + 3 CO2 + H2O. It carries out the reaction L-arginine + 2-oxoglutarate + O2 = guanidine + L-glutamate 5-semialdehyde + succinate + CO2. It participates in alkene biosynthesis; ethylene biosynthesis via 2-oxoglutarate. Simultaneously catalyzes two reactions, namely formation of ethylene and of succinate from 2-oxoglutarate. In Pseudomonas syringae pv. pisi, this protein is 2-oxoglutarate-dependent ethylene/succinate-forming enzyme (efe).